The chain runs to 187 residues: Cerebral dopamine neurotrophic factor (187 aa).

The signal sequence occupies residues 1–24 (MRCISPTALVTFCAGFCISNPVLA). Intrachain disulfides connect cysteine 37-cysteine 124, cysteine 40-cysteine 113, and cysteine 71-cysteine 82.

The protein belongs to the ARMET family. In terms of tissue distribution, expressed at high levels in the heart, skeletal muscle, testis and brain (at protein level). In the brain, detected in the cerebral cortex neurons through layers II to VI. In the hippocampus, detected in the CA1 to CA3 pyramidal regions and in the granule and polymorph layers of dentate gyrus. Weak expression in the striatum. In substantia nigra, detected in solitary cells that did not express tyrosine hydroxylase, a marker for dopaminergic neurons. Relatively high expression in the Purkinje cells of the cerebellum and in regions of the brain stem, including the locus coeruleus.

It is found in the secreted. In terms of biological role, trophic factor for dopamine neurons. Prevents the 6-hydroxydopamine (6-OHDA)-induced degeneration of dopaminergic neurons. When administered after 6-OHDA-lesioning, restores the dopaminergic function and prevents the degeneration of dopaminergic neurons in substantia nigra. This is Cerebral dopamine neurotrophic factor (Cdnf) from Mus musculus (Mouse).